The primary structure comprises 354 residues: Protein OVEREXPRESSOR OF CATIONIC PEROXIDASE 3 (354 aa).

Positions 63–70 (NRKGFVSS) match the Nuclear localization signal 1 motif. Disordered regions lie at residues 65-98 (KGFV…EDPF) and 151-186 (TGDV…PTKL). A compositionally biased stretch (acidic residues) spans 154–181 (VDVDVDNDDDDNDDDDNDDDDDDSEEDE). Residues 191–198 (LKRLAYAL) carry the Nuclear localization signal 2 motif. The disordered stretch occupies residues 243–264 (KPPVAAPENSSPDPSPVESLSA). Residues 286–345 (RWSAQKRVKKAHIETLEKVYRRSKRPTNAVVSSIVQVTNLPRKRVLKWFEDKRAEDGVPD) constitute a DNA-binding region (homeobox). The Nuclear localization signal 3 signature appears at 293 to 300 (VKKAHIET).

Its subcellular location is the nucleus. Functionally, may modulate chromatin structure by regulation of nucleosome assembly/disassembly. Homeodomain transcription factor that mediates jasmonic acid (JA)-mediated COI1-dependent and abscisic acid (ABA)-mediated PMR4-dependent resistance to infection by necrotrophic fungal pathogens (e.g. B.cinerea and P.cucumerina) and bacterial pathogens (e.g. P.syringae DC3000); this resistance involves at least callose deposition. Required for the P.fluorescens WCS417r-triggered JA-dependent induced systemic resistance (ISR) against both P.syringae DC3000 and H.arabidopsidis. Negative regulator of the ABA-dependent drought resistance. This chain is Protein OVEREXPRESSOR OF CATIONIC PEROXIDASE 3, found in Arabidopsis thaliana (Mouse-ear cress).